The chain runs to 323 residues: Ficolin-2 (323 aa).

Positions 1 to 26 (MDTRGVAAAMRPLVLLVAFLCTAAPA) are cleaved as a signal peptide. In terms of domain architecture, Collagen-like spans 52–102 (GLPGAAGPKGEAGASGPKGGQGPPGAPGEPGPPGPKGDRGEKGEPGPKGES). Low complexity predominate over residues 55 to 66 (GAAGPKGEAGAS). The interval 55–107 (GAAGPKGEAGASGPKGGQGPPGAPGEPGPPGPKGDRGEKGEPGPKGESWETEQ) is disordered. Over residues 75–86 (PGAPGEPGPPGP) the composition is skewed to pro residues. Residues 87-102 (KGDRGEKGEPGPKGES) are compositionally biased toward basic and acidic residues. The region spanning 106–323 (EQCLTGPRTC…KVSEMKFRAT (218 aa)) is the Fibrinogen C-terminal domain. Intrachain disulfides connect C108–C136 and C115–C143. N249 carries an N-linked (GlcNAc...) asparagine glycan. 3 residues coordinate Ca(2+): D259, D261, and S265. C267 and C280 are disulfide-bonded. N-linked (GlcNAc...) asparagine glycosylation is found at N302 and N310.

This sequence belongs to the ficolin lectin family. In terms of assembly, homotrimer. Interacts with elastin. Interacts with MASP1 and MASP2. As to expression, mainly expressed in skeletal muscle.

It localises to the secreted. In terms of biological role, may function in innate immunity through activation of the lectin complement pathway. Calcium-dependent and GlcNAc-binding lectin. This Sus scrofa (Pig) protein is Ficolin-2 (FCN2).